The chain runs to 795 residues: Probable diacylglycerol kinase 3 (795 aa).

EF-hand domains lie at 170–205 and 215–250; these read TPENKLDVVFHVYDSDGNGFLDKSEIDGIIEQMMNV and ELEQVIRQMMVDIDYDNDGIVSFDEWRRGGLTNIPL. Ca(2+)-binding residues include Asp-183, Asp-185, Asn-187, Glu-194, Asp-228, Asp-230, Asp-232, and Glu-239. 2 consecutive Phorbol-ester/DAG-type zinc fingers follow at residues 265–316 and 329–375; these read SHVW…ATNC and YHHW…AQEC. Positions 423–558 constitute a DAGKc domain; it reads NDCRPLLVLV…MDRWQIKIEI (136 aa).

It belongs to the eukaryotic diacylglycerol kinase family. As to quaternary structure, monomer.

It catalyses the reaction a 1,2-diacyl-sn-glycerol + ATP = a 1,2-diacyl-sn-glycero-3-phosphate + ADP + H(+). Involved in AFD-neuron mediated thermotaxis. Regulates behavior to environmental temperature. Thought to have a role in olfactory adaptation by affecting diacylglycerol levels. The polypeptide is Probable diacylglycerol kinase 3 (dgk-3) (Caenorhabditis elegans).